Consider the following 630-residue polypeptide: Putative adenylate cyclase regulatory protein (630 aa).

The RING-type zinc-finger motif lies at 10-46 (CAVCREPWAEGALELFPCRHVFCTVCVVERWRCPSCQ). 18 LRR repeats span residues 184 to 206 (FLVHLEVDGSRGVTDITGLCRLK), 207 to 230 (TLEALSLDSCINITKGFDKICALP), 231 to 251 (QLTSLSLCQTNVTDKDLRCIH), 255 to 277 (KLKVLRYSSCHEITDLTAIGGMR), 278 to 301 (SLEKLSLSGCWNVTKGLEELCKFS), 302 to 324 (NLRELDISGCLVLGSAVVLKNLI), 325 to 347 (NLKVLSVSNCKNFKDLNGLERLV), 348 to 370 (NLDKLNLSGCHGVSSLGFVANLS), 371 to 393 (NLKELDISGCESLVCFDGLQDLN), 394 to 416 (NLEVLYLRDVKSFTNVGAIKNLS), 417 to 439 (KMRELDLSGCERITSLSGLETLK), 440 to 462 (GLEELSLEGCGEIMSFDPIWSLH), 463 to 485 (HLRVLYVSECGNLEDLSGLEGIT), 486 to 508 (GLEELYLHGCRKCTNFGPIWNLR), 509 to 531 (NVCVVELSCCENLEDLSGLQCLT), 532 to 554 (GLEELYLIGCEEITPIGVVGNLR), 555 to 577 (NLKCLSTCWCANLKELGGLDRLV), and 578 to 599 (NLEKLDLSGCCGLSSSVFMELM).

Its function is as follows. May interact with adenylate cyclase to regulate its activity. In terms of biological role, may be involved in the postranscriptional regulation of genes in VSG expression sites. The sequence is that of Putative adenylate cyclase regulatory protein (ESAG8C) from Trypanosoma equiperdum.